Here is a 110-residue protein sequence, read N- to C-terminus: Co-chaperonin GroES (110 aa).

This sequence belongs to the GroES chaperonin family. Heptamer of 7 subunits arranged in a ring. Interacts with the chaperonin GroEL.

It is found in the cytoplasm. Its function is as follows. Together with the chaperonin GroEL, plays an essential role in assisting protein folding. The GroEL-GroES system forms a nano-cage that allows encapsulation of the non-native substrate proteins and provides a physical environment optimized to promote and accelerate protein folding. GroES binds to the apical surface of the GroEL ring, thereby capping the opening of the GroEL channel. This Mycoplasma genitalium (strain ATCC 33530 / DSM 19775 / NCTC 10195 / G37) (Mycoplasmoides genitalium) protein is Co-chaperonin GroES.